The chain runs to 445 residues: Phosphoglucosamine mutase (445 aa).

The active-site Phosphoserine intermediate is Ser-102. Mg(2+) is bound by residues Ser-102, Asp-240, Asp-242, and Asp-244. Residue Ser-102 is modified to Phosphoserine.

This sequence belongs to the phosphohexose mutase family. Requires Mg(2+) as cofactor. In terms of processing, activated by phosphorylation.

It carries out the reaction alpha-D-glucosamine 1-phosphate = D-glucosamine 6-phosphate. Its function is as follows. Catalyzes the conversion of glucosamine-6-phosphate to glucosamine-1-phosphate. This Mycobacterium sp. (strain JLS) protein is Phosphoglucosamine mutase.